Reading from the N-terminus, the 235-residue chain is Probable inactive serine protease 37 (235 aa).

The N-terminal stretch at 1–19 is a signal peptide; sequence MKYVFYLGVLAGTFFFADS. Residues 20-233 enclose the Peptidase S1 domain; that stretch reads SVQKEDPAPY…YVSWIENTAK (214 aa). 3 disulfides stabilise this stretch: Cys40–Cys56, Cys131–Cys198, and Cys163–Cys177.

It belongs to the peptidase S1 family. Testis-specific. Expressed in spermatids (at protein level).

Its subcellular location is the cytoplasmic vesicle. It localises to the secretory vesicle. The protein resides in the acrosome. The protein localises to the secreted. In terms of biological role, plays a role in male fertility. May have a role in sperm migration or binding to zona-intact eggs. Involved in the activation of the proacrosin/acrosin system. The polypeptide is Probable inactive serine protease 37 (Homo sapiens (Human)).